Here is a 154-residue protein sequence, read N- to C-terminus: uncharacterized protein (154 aa).

Helical transmembrane passes span 54-74 (FLIT…IYLL) and 81-101 (FAFV…FFLS).

The protein resides in the cell membrane. This is an uncharacterized protein from Mycoplasma genitalium (strain ATCC 33530 / DSM 19775 / NCTC 10195 / G37) (Mycoplasmoides genitalium).